Reading from the N-terminus, the 713-residue chain is Signal transducer and activator of transcription 1 (713 aa).

One can recognise an SH2 domain in the interval W477–E574.

It belongs to the transcription factor STAT family. Forms a homodimer or a heterodimer with a related family member.

The protein resides in the cytoplasm. It is found in the nucleus. Functionally, carries out a dual function: signal transduction and activation of transcription. Activated STAT proteins play a role in repression of dauer formation. Neuronal expression is held in check by negative signals through the TGF-beta pathway that target the daf-3 transcription factor. This Caenorhabditis briggsae protein is Signal transducer and activator of transcription 1.